The primary structure comprises 433 residues: Staphylopine synthase (433 aa).

Residues 9–12 (TGPV), arginine 33, 37–40 (SEKS), and aspartate 99 each bind NADP(+). Histidine 216 (proton donor/acceptor) is an active-site residue.

It belongs to the staphylopine dehydrogenase family. Homodimer.

It catalyses the reaction staphylopine + NADP(+) + H2O = (2S)-2-amino-4-{[(1R)-1-carboxy-2-(1H-imidazol-4-yl)ethyl]amino}butanoate + pyruvate + NADPH + H(+). In terms of biological role, catalyzes the NADPH-dependent reductive condensation of pyruvate to the intermediate formed by the adjacently encoded enzyme CntL, namely (2S)-2-amino-4-{[(1R)-1-carboxy-2-(1H-imidazol-4-yl)ethyl]amino}butanoate, leading to the production of staphylopine. This is the last step in the biosynthesis of the metallophore staphylopine, which is involved in the acquisition of nickel, cobalt, zinc, copper, and iron, and thus enables bacterial growth inside the host, where metal access is limited. Therefore, this enzyme probably contributes to staphylococcal virulence. Can use neither NADH nor alpha-ketoglutarate in place of NADPH and pyruvate, respectively. This Staphylococcus aureus (strain Mu50 / ATCC 700699) protein is Staphylopine synthase.